We begin with the raw amino-acid sequence, 1298 residues long: Outer capsid protein VP1 (1298 aa).

The protein belongs to the aquareoviridae outer capsid VP1 protein family.

The protein localises to the virion. It catalyses the reaction a 5'-end diphospho-ribonucleoside in mRNA + GTP + H(+) = a 5'-end (5'-triphosphoguanosine)-ribonucleoside in mRNA + diphosphate. The enzyme catalyses a 5'-end (5'-triphosphoguanosine)-ribonucleoside in mRNA + S-adenosyl-L-methionine = a 5'-end (N(7)-methyl 5'-triphosphoguanosine)-ribonucleoside in mRNA + S-adenosyl-L-homocysteine. Outer capsid protein involved in mRNA capping. Catalyzes the last 3 enzymatic activities for formation of the 5' cap structure on the viral plus-strand transcripts, namely the RNA guanylyltransferase, RNA-7N- and RNA-2'O-methyltransferase activities. The sequence is that of Outer capsid protein VP1 (S1) from Ctenopharyngodon idella (Grass carp).